The following is a 107-amino-acid chain: U1-lycotoxin-Ls1b (107 aa).

The first 20 residues, 1–20, serve as a signal peptide directing secretion; sequence MMKVLVVVALLVTLISYSSS. The propeptide occupies 21 to 41; it reads EGIDDLEADELLSLMANEQTR. Disulfide bonds link Cys-44–Cys-59, Cys-51–Cys-68, Cys-58–Cys-86, and Cys-70–Cys-84.

The protein belongs to the neurotoxin 19 (CSTX) family. 04 (U1-Lctx) subfamily. Expressed by the venom gland.

The protein resides in the secreted. This Lycosa singoriensis (Wolf spider) protein is U1-lycotoxin-Ls1b.